Consider the following 255-residue polypeptide: Proteasome subunit alpha type-3 (255 aa).

The residue at position 2 (S2) is an N-acetylserine. N6-acetyllysine occurs at positions 57, 206, and 230. S243 and S250 each carry phosphoserine.

It belongs to the peptidase T1A family. As to quaternary structure, the 26S proteasome consists of a 20S proteasome core and two 19S regulatory subunits. The 20S proteasome core is a barrel-shaped complex made of 28 subunits that are arranged in four stacked rings. The two outer rings are each formed by seven alpha subunits, and the two inner rings are formed by seven beta subunits. The proteolytic activity is exerted by three beta-subunits PSMB5, PSMB6 and PSMB7. Interacts with AURKB. Interacts with CDKN1A. Interacts with MDM2 and RB1. Interacts with the C-terminus of TBXA2R isoform 2. Interacts with DNAJB2. (Microbial infection) Interacts with HIV-1 Tat protein. In terms of assembly, (Microbial infection) Interacts with hepatitis C virus (HCV) F protein. As to quaternary structure, (Microbial infection) Interacts with Epstein-Barr virus EBNA3 proteins.

It localises to the cytoplasm. The protein resides in the nucleus. Component of the 20S core proteasome complex involved in the proteolytic degradation of most intracellular proteins. This complex plays numerous essential roles within the cell by associating with different regulatory particles. Associated with two 19S regulatory particles, forms the 26S proteasome and thus participates in the ATP-dependent degradation of ubiquitinated proteins. The 26S proteasome plays a key role in the maintenance of protein homeostasis by removing misfolded or damaged proteins that could impair cellular functions, and by removing proteins whose functions are no longer required. Associated with the PA200 or PA28, the 20S proteasome mediates ubiquitin-independent protein degradation. This type of proteolysis is required in several pathways including spermatogenesis (20S-PA200 complex) or generation of a subset of MHC class I-presented antigenic peptides (20S-PA28 complex). Binds to the C-terminus of CDKN1A and thereby mediates its degradation. Negatively regulates the membrane trafficking of the cell-surface thromboxane A2 receptor (TBXA2R) isoform 2. This chain is Proteasome subunit alpha type-3, found in Homo sapiens (Human).